Consider the following 208-residue polypeptide: 3-demethoxyubiquinol 3-hydroxylase (208 aa).

The Fe cation site is built by Glu-57, Glu-87, His-90, Glu-139, Glu-171, and His-174.

It belongs to the COQ7 family. Fe cation is required as a cofactor.

The protein resides in the cell membrane. It catalyses the reaction a 5-methoxy-2-methyl-3-(all-trans-polyprenyl)benzene-1,4-diol + AH2 + O2 = a 3-demethylubiquinol + A + H2O. The protein operates within cofactor biosynthesis; ubiquinone biosynthesis. Catalyzes the hydroxylation of 2-nonaprenyl-3-methyl-6-methoxy-1,4-benzoquinol during ubiquinone biosynthesis. In Burkholderia lata (strain ATCC 17760 / DSM 23089 / LMG 22485 / NCIMB 9086 / R18194 / 383), this protein is 3-demethoxyubiquinol 3-hydroxylase.